The primary structure comprises 62 residues: UPF0434 protein Avi_4243 (62 aa).

Belongs to the UPF0434 family.

In Allorhizobium ampelinum (strain ATCC BAA-846 / DSM 112012 / S4) (Agrobacterium vitis (strain S4)), this protein is UPF0434 protein Avi_4243.